We begin with the raw amino-acid sequence, 32 residues long: Beta-amanitin proprotein (32 aa).

Positions Met1–Pro10 are excised as a propeptide. The cyclopeptide (Ile-Pro) cross-link spans Ile11 to Pro18. Positions Trp12–Cys16 form a cross-link, 2'-cysteinyl-6'-hydroxytryptophan sulfoxide (Trp-Cys). Positions Cys19–Glu32 are excised as a propeptide.

It belongs to the MSDIN fungal toxin family. In terms of processing, processed by the macrocyclase-peptidase enzyme POPB to yield a toxic cyclic decapeptide. POPB first removes 10 residues from the N-terminus. Conformational trapping of the remaining peptide forces the enzyme to release this intermediate rather than proceed to macrocyclization. The enzyme rebinds the remaining peptide in a different conformation and catalyzes macrocyclization of the N-terminal 8 residues.

Functionally, toxin belonging to the bicyclic octapeptides amatoxins that acts by binding non-competitively to RNA polymerase II and greatly slowing the elongation of transcripts from target promoters. This chain is Beta-amanitin proprotein, found in Amanita phalloides (Death cap).